A 155-amino-acid polypeptide reads, in one-letter code: Short-chain-enoyl-CoA hydratase (155 aa).

It belongs to the enoyl-CoA hydratase/isomerase family.

It catalyses the reaction a short-chain (3S)-3-hydroxyacyl-CoA = a short-chain (2E)-enoyl-CoA + H2O. It participates in lipid metabolism; butanoate metabolism. This chain is Short-chain-enoyl-CoA hydratase (crt), found in Clostridioides difficile (Peptoclostridium difficile).